Consider the following 417-residue polypeptide: NADH-quinone oxidoreductase subunit D (417 aa).

It belongs to the complex I 49 kDa subunit family. In terms of assembly, NDH-1 is composed of 14 different subunits. Subunits NuoB, C, D, E, F, and G constitute the peripheral sector of the complex.

The protein resides in the cell inner membrane. It carries out the reaction a quinone + NADH + 5 H(+)(in) = a quinol + NAD(+) + 4 H(+)(out). Its function is as follows. NDH-1 shuttles electrons from NADH, via FMN and iron-sulfur (Fe-S) centers, to quinones in the respiratory chain. The immediate electron acceptor for the enzyme in this species is believed to be ubiquinone. Couples the redox reaction to proton translocation (for every two electrons transferred, four hydrogen ions are translocated across the cytoplasmic membrane), and thus conserves the redox energy in a proton gradient. This Francisella tularensis subsp. mediasiatica (strain FSC147) protein is NADH-quinone oxidoreductase subunit D.